Reading from the N-terminus, the 93-residue chain is U11-ctenitoxin-Pn1a (93 aa).

The first 21 residues, 1 to 21 (MKCAVLFLSVIALVHIFVVEA), serve as a signal peptide directing secretion. The propeptide occupies 22–34 (EEEPDSDALVPQE). 5 cysteine pairs are disulfide-bonded: Cys-37–Cys-51, Cys-44–Cys-57, Cys-50–Cys-75, Cys-59–Cys-73, and Cys-83–Cys-90.

This sequence belongs to the neurotoxin 09 (Tx3-6) family. In terms of tissue distribution, expressed by the venom gland.

It localises to the secreted. Its function is as follows. Probable neurotoxin. The protein is U11-ctenitoxin-Pn1a of Phoneutria nigriventer (Brazilian armed spider).